The following is a 941-amino-acid chain: Glycine dehydrogenase (decarboxylating) (941 aa).

Lysine 692 bears the N6-(pyridoxal phosphate)lysine mark.

Belongs to the GcvP family. The glycine cleavage system is composed of four proteins: P, T, L and H. Pyridoxal 5'-phosphate is required as a cofactor.

The enzyme catalyses N(6)-[(R)-lipoyl]-L-lysyl-[glycine-cleavage complex H protein] + glycine + H(+) = N(6)-[(R)-S(8)-aminomethyldihydrolipoyl]-L-lysyl-[glycine-cleavage complex H protein] + CO2. The glycine cleavage system catalyzes the degradation of glycine. The P protein binds the alpha-amino group of glycine through its pyridoxal phosphate cofactor; CO(2) is released and the remaining methylamine moiety is then transferred to the lipoamide cofactor of the H protein. The sequence is that of Glycine dehydrogenase (decarboxylating) from Mycobacterium bovis (strain ATCC BAA-935 / AF2122/97).